Consider the following 212-residue polypeptide: Synaptosomal-associated protein 25 (212 aa).

T-SNARE coiled-coil homology domains follow at residues 26 to 88 and 148 to 210; these read QGVA…LSGM and DARE…AHQL.

This sequence belongs to the SNAP-25 family. In terms of tissue distribution, exclusively found in brain and ganglia.

Its subcellular location is the synapse. The protein localises to the synaptosome. Functionally, may play an important role in the synaptic function of specific neuronal systems. Associates with proteins involved in vesicle docking and membrane fusion. This Drosophila melanogaster (Fruit fly) protein is Synaptosomal-associated protein 25 (Snap25).